The following is a 602-amino-acid chain: Zinc finger protein 652-B (602 aa).

Positions 60-232 are disordered; sequence FQDSKPTNEV…PSDKAKSEEK (173 aa). A compositionally biased stretch (basic and acidic residues) spans 65–79; it reads PTNEVHAVKGERENS. Acidic residues-rich tracts occupy residues 80 to 108 and 148 to 167; these read GESE…DEDE and DDEG…DEEN. The segment covering 222-232 has biased composition (basic and acidic residues); the sequence is SPSDKAKSEEK. The C2H2-type 1 zinc-finger motif lies at 235-258; that stretch reads LTCDKCPRVFNTRWYLEKHMNVTH. The C2H2-type 2; degenerate zinc-finger motif lies at 262 to 284; the sequence is QICDKCGKKFVLESELSLHLQTD. 6 C2H2-type zinc fingers span residues 289–312, 319–341, 347–369, 375–397, 403–425, and 431–453; these read IQCI…KIVH, FSCE…LVAH, FTCE…SLQH, FRCE…MSIH, FMCQ…MKTH, and FICE…RRTH. The segment at 459–482 adopts a C2H2-type 9; degenerate zinc-finger fold; it reads YPCDVCGMRFRFSNMLKAHKEKCF. Positions 543–575 are disordered; it reads PFSHLHLHPHSHTHHLAVPPVPHLPPPPALFKS. A compositionally biased stretch (basic residues) spans 545-557; the sequence is SHLHLHPHSHTHH. Positions 561 to 571 are enriched in pro residues; sequence PPVPHLPPPPA.

It belongs to the krueppel C2H2-type zinc-finger protein family.

Its subcellular location is the nucleus. Its function is as follows. May be involved in transcriptional regulation. The sequence is that of Zinc finger protein 652-B (znf652-b) from Xenopus laevis (African clawed frog).